The following is a 236-amino-acid chain: Phosphoribosylaminoimidazole-succinocarboxamide synthase (236 aa).

Belongs to the SAICAR synthetase family.

It catalyses the reaction 5-amino-1-(5-phospho-D-ribosyl)imidazole-4-carboxylate + L-aspartate + ATP = (2S)-2-[5-amino-1-(5-phospho-beta-D-ribosyl)imidazole-4-carboxamido]succinate + ADP + phosphate + 2 H(+). The protein operates within purine metabolism; IMP biosynthesis via de novo pathway; 5-amino-1-(5-phospho-D-ribosyl)imidazole-4-carboxamide from 5-amino-1-(5-phospho-D-ribosyl)imidazole-4-carboxylate: step 1/2. The sequence is that of Phosphoribosylaminoimidazole-succinocarboxamide synthase from Rickettsia typhi (strain ATCC VR-144 / Wilmington).